Reading from the N-terminus, the 305-residue chain is Acetylglutamate kinase (305 aa).

Substrate-binding positions include 80-81 (GG), R102, and N196.

It belongs to the acetylglutamate kinase family. ArgB subfamily.

The protein localises to the cytoplasm. It carries out the reaction N-acetyl-L-glutamate + ATP = N-acetyl-L-glutamyl 5-phosphate + ADP. The protein operates within amino-acid biosynthesis; L-arginine biosynthesis; N(2)-acetyl-L-ornithine from L-glutamate: step 2/4. Its function is as follows. Catalyzes the ATP-dependent phosphorylation of N-acetyl-L-glutamate. In Chlorobium luteolum (strain DSM 273 / BCRC 81028 / 2530) (Pelodictyon luteolum), this protein is Acetylglutamate kinase.